Consider the following 419-residue polypeptide: Peroxisome biogenesis factor 10 (419 aa).

At 1-27 the chain is on the peroxisomal matrix side; the sequence is MPPSEEIKLRAVSPRPDFKANYLEFAN. A helical transmembrane segment spans residues 28–57; the sequence is APAIVRANQKDSYFETVLRDKLQNVIQIFK. A topological domain (cytoplasmic) is located at residue Gly58. The chain crosses the membrane as a helical span at residues 59 to 80; the sequence is QRFTHTHPEEIGVAAKALYLSL. At 81-108 the chain is on the peroxisomal matrix side; it reads TTLLGTKTLGEEYVDLIYVSRDGKRIPR. A helical transmembrane segment spans residues 109–141; it reads YLARAGFIFAYAILPYFLTRLFRRLKSSSTPKD. The Cytoplasmic segment spans residues 142-158; it reads EVTEEKINKELPISLRI. Residues 159–185 form a helical membrane-spanning segment; sequence EKYLSNMSYSKVLDTIMNLHIAVFYFS. The Peroxisomal matrix segment spans residues 186–215; sequence GQFYNISKRFFSMRYAFGHKINKERTPNGN. Residues 216–235 form a helical membrane-spanning segment; sequence YELLGGLIVLQLVMKSLGGF. Over 236–419 the chain is Cytoplasmic; that stretch reads KGLIGSFTGN…RTLGYFLVVF (184 aa). Zn(2+) is bound by residues Cys298, Cys301, Cys313, His315, Cys318, Cys321, Cys334, and Cys347. The segment at 298 to 360 adopts an RING-type zinc-finger fold; that stretch reads CMLCLSYMTN…FYIPTLNKIC (63 aa).

This sequence belongs to the pex2/pex10/pex12 family. Component of the peroxisomal translocation complex, composed of at least PEX3, PEX2, PEX10 and PEX12. Interacts with PEX19.

The protein resides in the peroxisome membrane. It catalyses the reaction S-ubiquitinyl-[E2 ubiquitin-conjugating enzyme]-L-cysteine + [acceptor protein]-L-lysine = [E2 ubiquitin-conjugating enzyme]-L-cysteine + N(6)-ubiquitinyl-[acceptor protein]-L-lysine.. It participates in protein modification; protein ubiquitination. With respect to regulation, the E3 ubiquitin-protein ligase activity is stimulated by PEX12. In terms of biological role, E3 ubiquitin-protein ligase component of the peroxisomal translocation complex. The two types of peroxisomal matrix targeting signals, PTS1 and PTS2, are first recognized in the cytosol by their receptors PEX5 and PEX7, respectively, which then carry the cargo to the peroxisomal membrane. The peroxisomal targeting signal (PTS) receptor-cargo complexes interact with peroxisomal membrane protein (PMP) components of the docking complex. They have then additional downstream interactions with the translocation complex, leading to the transport of fully folded and oligomerized cargo into the peroxisome matrix. The peroxisomal translocation complex forms the retrotranslocation channel with each subunit contributing transmembrane segments that coassemble into an open channel that specifically allows the passage of PEX5 and PEX20 through the peroxisomal membrane. Specifically catalyzes monoubiquitination of PEX5 and/or PEX20 at 'Cys-6' and 'Cys-8', respectively, a modification that acts as a signal for PEX5 or PEX20 export from peroxisomes to the cytosol, thereby promoting PEX5 and PEX20 recycling. This is Peroxisome biogenesis factor 10 from Komagataella pastoris (Yeast).